A 191-amino-acid polypeptide reads, in one-letter code: Protein Ves (191 aa).

Belongs to the Ves family.

The protein is Protein Ves of Citrobacter koseri (strain ATCC BAA-895 / CDC 4225-83 / SGSC4696).